Here is a 462-residue protein sequence, read N- to C-terminus: Argininosuccinate lyase (462 aa).

This sequence belongs to the lyase 1 family. Argininosuccinate lyase subfamily.

Its subcellular location is the cytoplasm. The catalysed reaction is 2-(N(omega)-L-arginino)succinate = fumarate + L-arginine. The protein operates within amino-acid biosynthesis; L-arginine biosynthesis; L-arginine from L-ornithine and carbamoyl phosphate: step 3/3. In Gloeothece citriformis (strain PCC 7424) (Cyanothece sp. (strain PCC 7424)), this protein is Argininosuccinate lyase.